The primary structure comprises 436 residues: tRNA(Ile)-lysidine synthase (436 aa).

An ATP-binding site is contributed by 25–30; that stretch reads SGGLDS.

This sequence belongs to the tRNA(Ile)-lysidine synthase family.

The protein localises to the cytoplasm. The enzyme catalyses cytidine(34) in tRNA(Ile2) + L-lysine + ATP = lysidine(34) in tRNA(Ile2) + AMP + diphosphate + H(+). In terms of biological role, ligates lysine onto the cytidine present at position 34 of the AUA codon-specific tRNA(Ile) that contains the anticodon CAU, in an ATP-dependent manner. Cytidine is converted to lysidine, thus changing the amino acid specificity of the tRNA from methionine to isoleucine. The protein is tRNA(Ile)-lysidine synthase of Serratia proteamaculans (strain 568).